Consider the following 539-residue polypeptide: Tyrosine-protein kinase csk-1 (539 aa).

In terms of domain architecture, SH3 spans 43–110 (SPGNDVIVTR…HADCVVRING (68 aa)). The segment at 129–148 (PGAASTTSSTSSHHSTAANH) is disordered. The segment covering 131–146 (AASTTSSTSSHHSTAA) has biased composition (low complexity). The SH2 domain occupies 151-241 (WFHSMISREN…GLCHRLVTPI (91 aa)). A Protein kinase domain is found at 283 to 535 (IDVGDTIGHG…GQVLQRLTTI (253 aa)). Residues 289-297 (IGHGEFGDV) and Lys310 each bind ATP. Asp403 (proton acceptor) is an active-site residue.

Belongs to the protein kinase superfamily. Tyr protein kinase family. CSK subfamily. Requires Mg(2+) as cofactor. The cofactor is Mn(2+). Expressed predominantly in pharyngeal muscles in procorpus, metacorpus and terminal bulb. Expressed also in some neurons (ASE, ADF, AVA, AUA, RMDV and BAG) in the head region, anchor cell, vulva, cells around anus, body wall muscle and gondal distal tip cells.

It carries out the reaction L-tyrosyl-[protein] + ATP = O-phospho-L-tyrosyl-[protein] + ADP + H(+). Non-receptor tyrosine-protein kinase which plays a role in pharynx function by regulating pumping and the orientation of pharyngeal muscle fibers, independently of src-1 and src-2. May phosphorylate and thereby negatively regulate src-1 and src-2 activities. This chain is Tyrosine-protein kinase csk-1, found in Caenorhabditis elegans.